A 386-amino-acid polypeptide reads, in one-letter code: Glucose-1-phosphate adenylyltransferase (386 aa).

Residues Tyr100, Gly165, 180–181, and Ser191 each bind alpha-D-glucose 1-phosphate; that span reads EK.

This sequence belongs to the bacterial/plant glucose-1-phosphate adenylyltransferase family. Homotetramer.

It catalyses the reaction alpha-D-glucose 1-phosphate + ATP + H(+) = ADP-alpha-D-glucose + diphosphate. It functions in the pathway glycan biosynthesis; glycogen biosynthesis. Functionally, involved in the biosynthesis of ADP-glucose, a building block required for the elongation reactions to produce glycogen. Catalyzes the reaction between ATP and alpha-D-glucose 1-phosphate (G1P) to produce pyrophosphate and ADP-Glc. This is Glucose-1-phosphate adenylyltransferase from Clostridium botulinum (strain Eklund 17B / Type B).